Here is a 248-residue protein sequence, read N- to C-terminus: 3-deoxy-manno-octulosonate cytidylyltransferase (248 aa).

The protein belongs to the KdsB family.

Its subcellular location is the cytoplasm. The enzyme catalyses 3-deoxy-alpha-D-manno-oct-2-ulosonate + CTP = CMP-3-deoxy-beta-D-manno-octulosonate + diphosphate. Its pathway is nucleotide-sugar biosynthesis; CMP-3-deoxy-D-manno-octulosonate biosynthesis; CMP-3-deoxy-D-manno-octulosonate from 3-deoxy-D-manno-octulosonate and CTP: step 1/1. It functions in the pathway bacterial outer membrane biogenesis; lipopolysaccharide biosynthesis. Its function is as follows. Activates KDO (a required 8-carbon sugar) for incorporation into bacterial lipopolysaccharide in Gram-negative bacteria. This Chlorobaculum tepidum (strain ATCC 49652 / DSM 12025 / NBRC 103806 / TLS) (Chlorobium tepidum) protein is 3-deoxy-manno-octulosonate cytidylyltransferase.